Consider the following 274-residue polypeptide: Cytochrome b-c1 complex subunit Rieske, mitochondrial (274 aa).

Residues 79 to 103 (SHTDVKVPDFCDYRRPEVLDSTKSS) lie on the Mitochondrial matrix side of the membrane. The chain crosses the membrane as a helical span at residues 104–140 (RESSEARKSFSYMVTAVTTVGVAYAAKNAVTQFVSSM). Topologically, residues 141-274 (SASADVLAMA…FTSDDMVVVG (134 aa)) are mitochondrial intermembrane. A Rieske domain is found at 187 to 272 (EAAVELSQLR…YEFTSDDMVV (86 aa)). The [2Fe-2S] cluster site is built by C217, H219, C236, H239, and S241. C222 and C238 form a disulfide bridge.

Belongs to the Rieske iron-sulfur protein family. Component of the ubiquinol-cytochrome c oxidoreductase (cytochrome b-c1 complex, complex III, CIII), a multisubunit enzyme composed of 11 subunits. The complex is composed of 3 respiratory subunits cytochrome b, cytochrome c1 and Rieske protein UQCRFS1, 2 core protein subunits UQCRC1/QCR1 and UQCRC2/QCR2, and 6 low-molecular weight protein subunits UQCRH/QCR6, UQCRB/QCR7, UQCRQ/QCR8, UQCR10/QCR9, UQCR11/QCR10 and subunit 9, the cleavage product of Rieske protein UQCRFS1. The complex exists as an obligatory dimer and forms supercomplexes (SCs) in the inner mitochondrial membrane with NADH-ubiquinone oxidoreductase (complex I, CI) and cytochrome c oxidase (complex IV, CIV), resulting in different assemblies (supercomplex SCI(1)III(2)IV(1) and megacomplex MCI(2)III(2)IV(2)). Incorporation of the Rieske protein UQCRFS1 is the penultimate step in complex III assembly. Interacts with TTC19, which is involved in the clearance of UQCRFS1 fragments. In terms of assembly, component of the ubiquinol-cytochrome c oxidoreductase (cytochrome b-c1 complex, complex III, CIII). Subunit 9 corresponds to the mitochondrial targeting sequence (MTS) of Rieske protein UQCRFS1. It is retained after processing and incorporated inside complex III, where it remains bound to the complex and localizes between the 2 core subunits UQCRC1/QCR1 and UQCRC2/QCR2. [2Fe-2S] cluster is required as a cofactor. Proteolytic processing is necessary for the correct insertion of UQCRFS1 in the complex III dimer. Several fragments are generated during UQCRFS1 insertion, most probably due to the endogenous matrix-processing peptidase (MPP) activity of the 2 core protein subunits UQCRC1/QCR1 and UQCRC2/QCR2, which are homologous to the 2 mitochondrial-processing peptidase (MPP) subunits beta-MPP and alpha-MPP respectively. The action of the protease is also necessary for the clearance of the UQCRFS1 fragments.

The protein resides in the mitochondrion inner membrane. It carries out the reaction a quinol + 2 Fe(III)-[cytochrome c](out) = a quinone + 2 Fe(II)-[cytochrome c](out) + 2 H(+)(out). In terms of biological role, component of the ubiquinol-cytochrome c oxidoreductase, a multisubunit transmembrane complex that is part of the mitochondrial electron transport chain which drives oxidative phosphorylation. The respiratory chain contains 3 multisubunit complexes succinate dehydrogenase (complex II, CII), ubiquinol-cytochrome c oxidoreductase (cytochrome b-c1 complex, complex III, CIII) and cytochrome c oxidase (complex IV, CIV), that cooperate to transfer electrons derived from NADH and succinate to molecular oxygen, creating an electrochemical gradient over the inner membrane that drives transmembrane transport and the ATP synthase. The cytochrome b-c1 complex catalyzes electron transfer from ubiquinol to cytochrome c, linking this redox reaction to translocation of protons across the mitochondrial inner membrane, with protons being carried across the membrane as hydrogens on the quinol. In the process called Q cycle, 2 protons are consumed from the matrix, 4 protons are released into the intermembrane space and 2 electrons are passed to cytochrome c. The Rieske protein is a catalytic core subunit containing a [2Fe-2S] iron-sulfur cluster. It cycles between 2 conformational states during catalysis to transfer electrons from the quinol bound in the Q(0) site in cytochrome b to cytochrome c1. Incorporation of UQCRFS1 is the penultimate step in complex III assembly. Component of the ubiquinol-cytochrome c oxidoreductase (cytochrome b-c1 complex, complex III, CIII). UQCRFS1 undergoes proteolytic processing once it is incorporated in the complex III dimer. One of the fragments, called subunit 9, corresponds to its mitochondrial targeting sequence (MTS). The proteolytic processing is necessary for the correct insertion of UQCRFS1 in the complex III dimer, but the persistence of UQCRFS1-derived fragments may prevent newly imported UQCRFS1 to be processed and assembled into complex III and is detrimental for the complex III structure and function. The chain is Cytochrome b-c1 complex subunit Rieske, mitochondrial (UQCRFS1) from Colobus polykomos (Western black-and-white colobus monkey).